Here is a 182-residue protein sequence, read N- to C-terminus: Vacuolar protein sorting-associated protein 29 (182 aa).

Position 50 is an N6-acetyllysine (lysine 50).

It belongs to the VPS29 family. As to quaternary structure, component of the commander complex consisting of the CCC subcomplex and the retriever subcomplex. Component of the heterotrimeric retriever complex formed by VPS26C, VPS29 and VPS35L; within the complex interacts with VPS35L. Component of the heterotrimeric retromer cargo-selective complex (CSC), also described as vacuolar protein sorting subcomplex (VPS), formed by VPS26 (VPS26A or VPS26B), VPS29 and VPS35. The CSC has a highly elongated structure with VPS26 and VPS29 binding independently at opposite distal ends of VPS35 as central platform. The CSC is believed to associate with variable sorting nexins to form functionally distinct retromer complex variants. The originally described retromer complex (also called SNX-BAR retromer) is a pentamer containing the CSC and a heterodimeric membrane-deforming subcomplex formed between SNX1 or SNX2 and SNX5 or SNX6 (also called SNX-BAR subcomplex); the respective CSC and SNX-BAR subcomplexes associate with low affinity. The CSC associates with SNX3 to form a SNX3-retromer complex. The CSC associates with SNX27, the WASH complex and the SNX-BAR subcomplex to form the SNX27-retromer complex. Interacts with VPS26A, VPS35, SNX1, SNX2, SNX3, SNX27, WASHC5. Interacts with TBC1D5; this interaction is blocked by VPS35L in the retriever complex. Interacts with SNX17; the interaction is indirect; SNX17 (via its C-terminus) interacts with the retriever complex (via VPS26C and VPS35L). Interacts with VPS26B and ANKRD27.

It localises to the cytoplasm. The protein resides in the membrane. The protein localises to the endosome membrane. It is found in the early endosome. Its subcellular location is the late endosome. Functionally, component of the commander complex that is essential for endosomal recycling of transmembrane cargos; the commander complex is composed of the CCC subcomplex and the retriever subcomplex. Component of the retriever complex, which is a heterotrimeric complex related to retromer cargo-selective complex (CSC) and essential for retromer-independent retrieval and recycling of numerous cargos such as integrin alpha-5/beta-1 (ITGA5:ITGB1). Component of the retromer cargo-selective complex (CSC). The CSC is believed to be the core functional component of retromer or respective retromer complex variants acting to prevent missorting of selected transmembrane cargo proteins into the lysosomal degradation pathway. The recruitment of the CSC to the endosomal membrane involves RAB7A and SNX3. The SNX-BAR retromer mediates retrograde transport of cargo proteins from endosomes to the trans-Golgi network (TGN) and is involved in endosome-to-plasma membrane transport for cargo protein recycling. The SNX3-retromer mediates the retrograde endosome-to-TGN transport of WLS distinct from the SNX-BAR retromer pathway. The SNX27-retromer is believed to be involved in endosome-to-plasma membrane trafficking and recycling of a broad spectrum of cargo proteins. The CSC seems to act as recruitment hub for other proteins, such as the WASH complex and TBC1D5. Required to regulate transcytosis of the polymeric immunoglobulin receptor (pIgR-pIgA). In the endosomes, retriever complex drives the retrieval and recycling of NxxY-motif-containing cargo proteins by coupling to SNX17, a cargo essential for the homeostatic maintenance of numerous cell surface proteins associated with processes that include cell migration, cell adhesion, nutrient supply and cell signaling. The recruitment of the retriever complex to the endosomal membrane involves CCC and WASH complexes. Involved in GLUT1 endosome-to-plasma membrane trafficking; the function is dependent of association with ANKRD27. The chain is Vacuolar protein sorting-associated protein 29 from Rattus norvegicus (Rat).